A 300-amino-acid chain; its full sequence is uncharacterized protein (300 aa).

Positions 1 to 20 (MRLLISCILILSILVNFISG) are cleaved as a signal peptide. Residues 21 to 279 (HAVLVAPTPF…PCSIYGDGNG (259 aa)) lie on the Extracellular side of the membrane. N-linked (GlcNAc...) asparagine glycans are attached at residues asparagine 56, asparagine 217, and asparagine 278. A helical membrane pass occupies residues 280–300 (SNLIIIPTLLIISILSLILMF).

Its subcellular location is the membrane. This is an uncharacterized protein from Dictyostelium discoideum (Social amoeba).